Here is a 793-residue protein sequence, read N- to C-terminus: Neurobeachin (793 aa).

2 disordered regions span residues 68–92 (ENIK…TGAK) and 685–793 (RETA…EILK). 4 stretches are compositionally biased toward polar residues: residues 77-90 (NVST…QTTG), 689-710 (RSGS…STET), 750-762 (NILN…TSTG), and 782-793 (ESLTESPSEILK).

Belongs to the WD repeat neurobeachin family. As to quaternary structure, interacts with RII subunit of PKA. As to expression, forebrain and cerebellum.

The protein localises to the cytoplasm. It localises to the membrane. Binds to type II regulatory subunits of protein kinase A and anchors/targets them to the membrane. May anchor the kinase to cytoskeletal and/or organelle-associated proteins. In Gallus gallus (Chicken), this protein is Neurobeachin (NBEA).